The primary structure comprises 418 residues: CinA-like protein (418 aa).

Belongs to the CinA family.

The polypeptide is CinA-like protein (Leptospira interrogans serogroup Icterohaemorrhagiae serovar Lai (strain 56601)).